The following is a 122-amino-acid chain: Large ribosomal subunit protein uL18 (122 aa).

The protein belongs to the universal ribosomal protein uL18 family. As to quaternary structure, part of the 50S ribosomal subunit; part of the 5S rRNA/L5/L18/L25 subcomplex. Contacts the 5S and 23S rRNAs.

Its function is as follows. This is one of the proteins that bind and probably mediate the attachment of the 5S RNA into the large ribosomal subunit, where it forms part of the central protuberance. This Thermotoga neapolitana (strain ATCC 49049 / DSM 4359 / NBRC 107923 / NS-E) protein is Large ribosomal subunit protein uL18.